The chain runs to 239 residues: Probable transcriptional regulatory protein BCAH187_A0615 (239 aa).

This sequence belongs to the TACO1 family. YeeN subfamily.

It localises to the cytoplasm. This is Probable transcriptional regulatory protein BCAH187_A0615 from Bacillus cereus (strain AH187).